The chain runs to 270 residues: Glutamate racemase (270 aa).

Substrate-binding positions include 13–14 (DS) and 45–46 (YG). Residue Cys-77 is the Proton donor/acceptor of the active site. 78-79 (NT) serves as a coordination point for substrate. Cys-185 (proton donor/acceptor) is an active-site residue. 186 to 187 (TH) contributes to the substrate binding site.

Belongs to the aspartate/glutamate racemases family.

The enzyme catalyses L-glutamate = D-glutamate. It participates in cell wall biogenesis; peptidoglycan biosynthesis. Its function is as follows. Provides the (R)-glutamate required for cell wall biosynthesis. This is Glutamate racemase from Vibrio parahaemolyticus serotype O3:K6 (strain RIMD 2210633).